Here is a 105-residue protein sequence, read N- to C-terminus: MTTVSSDRIRIKLKAYDYRILDKAVAEIVDTARNTGAGVAGPIPLPTNIHKYTVNRSVHVDKKSREQFEMRIHKRLMDILEPTQQTVDALGKLSLPAGVDVEIKL.

It belongs to the universal ribosomal protein uS10 family. Part of the 30S ribosomal subunit.

Its function is as follows. Involved in the binding of tRNA to the ribosomes. The polypeptide is Small ribosomal subunit protein uS10 (Nitratidesulfovibrio vulgaris (strain DSM 19637 / Miyazaki F) (Desulfovibrio vulgaris)).